Reading from the N-terminus, the 189-residue chain is GTP cyclohydrolase 1 (189 aa).

3 residues coordinate Zn(2+): Cys79, His82, and Cys150.

This sequence belongs to the GTP cyclohydrolase I family. As to quaternary structure, toroid-shaped homodecamer, composed of two pentamers of five dimers.

The enzyme catalyses GTP + H2O = 7,8-dihydroneopterin 3'-triphosphate + formate + H(+). It participates in cofactor biosynthesis; 7,8-dihydroneopterin triphosphate biosynthesis; 7,8-dihydroneopterin triphosphate from GTP: step 1/1. In Rickettsia massiliae (strain Mtu5), this protein is GTP cyclohydrolase 1.